Consider the following 807-residue polypeptide: uncharacterized protein (807 aa).

The first 18 residues, 1–18 (MNTVLFVILLAAIGSNHG), serve as a signal peptide directing secretion. The Extracellular segment spans residues 19–704 (LIDERLTVNR…GLFTDIFGGE (686 aa)). Positions 133–142 (TTTTAAPQTG) are enriched in polar residues. Residues 133 to 171 (TTTTAAPQTGNRRRRRAAGDEPNTDDNTPPNLEIPDWLD) form a disordered region. Residues asparagine 277 and asparagine 660 are each glycosylated (N-linked (GlcNAc...) asparagine; by host). A helical membrane pass occupies residues 705–725 (VWAVIAAIFSPVFLTAFALII). The Cytoplasmic segment spans residues 726–807 (SLINFIPAVR…GERQVISRTN (82 aa)).

It localises to the host membrane. This is an uncharacterized protein from Magallana gigas (Pacific oyster).